The sequence spans 94 residues: Integration host factor subunit beta (94 aa).

This sequence belongs to the bacterial histone-like protein family. Heterodimer of an alpha and a beta chain.

In terms of biological role, this protein is one of the two subunits of integration host factor, a specific DNA-binding protein that functions in genetic recombination as well as in transcriptional and translational control. This is Integration host factor subunit beta from Haemophilus influenzae (strain PittGG).